A 638-amino-acid chain; its full sequence is uncharacterized protein (638 aa).

The signal sequence occupies residues 1–31 (MKFIKFNDSTIDSFLFMMLTDLAKTLTKSEA). 4 stretches are compositionally biased toward basic and acidic residues: residues 247-256 (EEKKAPKLSD), 273-284 (EEMPTWHRETEA), 301-310 (DLGKDASREG), and 329-342 (RKDYSKLEALESQK). Disordered regions lie at residues 247–285 (EEKKAPKLSDDITLPKQSDGDEDIHEEEMPTWHRETEAP) and 301–354 (DLGK…ADGK). The region spanning 445–632 (FTLLVDCSAS…DVLYPLLKKL (188 aa)) is the VWFA domain.

This is an uncharacterized protein from Bacillus subtilis (strain 168).